The following is a 591-amino-acid chain: Oligopeptide-binding protein OppA (591 aa).

This sequence belongs to the bacterial solute-binding protein 5 family. The complex is composed of an ATP-binding protein (OppD), two transmembrane proteins (OppB and OppC) and a solute-binding protein (OppA).

It is found in the periplasm. Its function is as follows. Part of the ABC transporter complex OppABCD involved in the uptake of oligopeptides. Peptide-binding protein that shows broad specificity but a moderate preference for hydrophobic oligopeptides and those that are 6-16 amino acids long. This is Oligopeptide-binding protein OppA from Mycobacterium bovis (strain ATCC BAA-935 / AF2122/97).